The chain runs to 96 residues: Guanine nucleotide-binding protein alpha-9 subunit (96 aa).

A G-alpha domain is found at Tyr2–Val96. A G1 motif region spans residues Ile9–Asp16. Residues Asn13–Asp16 and Ala69 each bind GTP. A G2 motif region spans residues Thr67–Thr72.

The protein belongs to the G-alpha family. As to quaternary structure, g proteins are composed of 3 units; alpha, beta and gamma. The alpha chain contains the guanine nucleotide binding site. Expressed in ASJ neurons.

Functionally, guanine nucleotide-binding proteins (G proteins) are involved as modulators or transducers in various transmembrane signaling systems. Plays a role in innate immunity and maintaining survival in response to metabolites of E.coli. This might be by regulating the expression and signaling of genes such as lys-8, ins-7 and daf-28. Has a role in lifespan to promote longevity. The sequence is that of Guanine nucleotide-binding protein alpha-9 subunit from Caenorhabditis elegans.